Reading from the N-terminus, the 337-residue chain is Biotin synthase (337 aa).

In terms of domain architecture, Radical SAM core spans 58–283; the sequence is EDVEVEGIVS…RTVLRYAGGR (226 aa). Cysteine 73, cysteine 77, and cysteine 80 together coordinate [4Fe-4S] cluster. Residues cysteine 116, cysteine 149, cysteine 208, and arginine 278 each contribute to the [2Fe-2S] cluster site.

Belongs to the radical SAM superfamily. Biotin synthase family. Homodimer. [4Fe-4S] cluster serves as cofactor. [2Fe-2S] cluster is required as a cofactor.

The enzyme catalyses (4R,5S)-dethiobiotin + (sulfur carrier)-SH + 2 reduced [2Fe-2S]-[ferredoxin] + 2 S-adenosyl-L-methionine = (sulfur carrier)-H + biotin + 2 5'-deoxyadenosine + 2 L-methionine + 2 oxidized [2Fe-2S]-[ferredoxin]. The protein operates within cofactor biosynthesis; biotin biosynthesis; biotin from 7,8-diaminononanoate: step 2/2. Functionally, catalyzes the conversion of dethiobiotin (DTB) to biotin by the insertion of a sulfur atom into dethiobiotin via a radical-based mechanism. This is Biotin synthase from Pseudarthrobacter chlorophenolicus (strain ATCC 700700 / DSM 12829 / CIP 107037 / JCM 12360 / KCTC 9906 / NCIMB 13794 / A6) (Arthrobacter chlorophenolicus).